Here is a 217-residue protein sequence, read N- to C-terminus: Regulator of G-protein signaling 19 (217 aa).

The disordered stretch occupies residues 1 to 29 (MPTPHEAEKQITGPEEADRPPSMSSHDTA). Phosphoserine occurs at positions 24 and 97. In terms of domain architecture, RGS spans 90–206 (SFDKLMHSPA…LSSPTYRALL (117 aa)). The residue at position 151 (Ser-151) is a Phosphoserine; by MAPK1 and MAPK3. Residues 207 to 217 (LQGPSQSSSEA) form an interaction with GIPC region.

Interacts with GIPC PDZ domain. Interacts with GNAO1. In terms of processing, fatty acylated. Heavily palmitoylated in the cysteine string motif. Phosphorylated, mainly on serine residues. As to expression, highest expression in lung. Placenta, liver and heart also express high levels of GAIP.

It localises to the membrane. Inhibits signal transduction by increasing the GTPase activity of G protein alpha subunits thereby driving them into their inactive GDP-bound form. Binds to G-alpha subfamily 1 members, with the order G(i)a3 &gt; G(i)a1 &gt; G(o)a &gt;&gt; G(z)a/G(i)a2. Activity on G(z)-alpha is inhibited by phosphorylation and palmitoylation of the G-protein. The protein is Regulator of G-protein signaling 19 (RGS19) of Homo sapiens (Human).